Consider the following 113-residue polypeptide: MNTLDFVDEKSLRSDVPDFRPGDTLNVHVKVIEGSKERIQVFKGVVIRRQGGGIRETFTVRKVSFGVGVERTFPVHSPNIDHIDVVTRGDVRRAKLYYLRDLRGKAAKIKEKR.

It belongs to the bacterial ribosomal protein bL19 family.

In terms of biological role, this protein is located at the 30S-50S ribosomal subunit interface and may play a role in the structure and function of the aminoacyl-tRNA binding site. The protein is Large ribosomal subunit protein bL19 of Nocardia farcinica (strain IFM 10152).